We begin with the raw amino-acid sequence, 441 residues long: UBX domain-containing protein 6 (441 aa).

Positions 1–10 (MKKFFQEIKA) are mediates interaction with LMAN1. Disordered stretches follow at residues 12 to 57 (IKFK…MAAA), 62 to 81 (RLEQ…SIRN), and 86 to 113 (ELRA…EEGS). The segment covering 27-36 (VGEKAPKEKP) has biased composition (basic and acidic residues). The VCP/p97-interacting motif (VIM) stretch occupies residues 51 to 63 (EAQMAAAAALARL). Positions 175-244 (VDTIAKYLDN…GPEEFYVLSE (70 aa)) constitute a PUB domain. Residues 332–408 (RKYTYTLLRV…GLVPSALLTF (77 aa)) enclose the UBX domain.

As to quaternary structure, interacts with VCP through the PUB domain (via C-terminus) and VIM motif (via N-terminus); the interaction is direct. Forms a ternary complex with CAV1 and VCP. Interacts with SYVN1. Interacts with HERPUD1. Interacts with VCPKMT. May interact with DERL1. Interacts with PLAA, VCP and YOD1; may form a complex involved in macroautophagy. Interacts with LMAN1.

Its subcellular location is the cytoplasm. The protein localises to the cytosol. The protein resides in the membrane. It is found in the nucleus. It localises to the cytoskeleton. Its subcellular location is the microtubule organizing center. The protein localises to the centrosome. The protein resides in the early endosome membrane. It is found in the late endosome membrane. It localises to the lysosome membrane. Functionally, may negatively regulate the ATPase activity of VCP, an ATP-driven segregase that associates with different cofactors to control a wide variety of cellular processes. As a cofactor of VCP, it may play a role in the transport of CAV1 to lysosomes for degradation. It may also play a role in endoplasmic reticulum-associated degradation (ERAD) of misfolded proteins. Together with VCP and other cofactors, it may play a role in macroautophagy, regulating for instance the clearance of damaged lysosomes. This chain is UBX domain-containing protein 6, found in Bos taurus (Bovine).